The following is a 164-amino-acid chain: Pyruvoyl-dependent arginine decarboxylase (164 aa).

At serine 52 the chain carries Pyruvic acid (Ser).

Belongs to the PdaD family. It depends on pyruvate as a cofactor.

The catalysed reaction is L-arginine + H(+) = agmatine + CO2. The protein is Pyruvoyl-dependent arginine decarboxylase of Methanococcus vannielii (strain ATCC 35089 / DSM 1224 / JCM 13029 / OCM 148 / SB).